The primary structure comprises 317 residues: Aspartate carbamoyltransferase catalytic subunit (317 aa).

2 residues coordinate carbamoyl phosphate: arginine 66 and threonine 67. An L-aspartate-binding site is contributed by lysine 94. Residues arginine 116, histidine 144, and glutamine 147 each contribute to the carbamoyl phosphate site. Residues arginine 177 and arginine 231 each coordinate L-aspartate. Glycine 272 and proline 273 together coordinate carbamoyl phosphate.

This sequence belongs to the aspartate/ornithine carbamoyltransferase superfamily. ATCase family. As to quaternary structure, heterododecamer (2C3:3R2) of six catalytic PyrB chains organized as two trimers (C3), and six regulatory PyrI chains organized as three dimers (R2).

The catalysed reaction is carbamoyl phosphate + L-aspartate = N-carbamoyl-L-aspartate + phosphate + H(+). It participates in pyrimidine metabolism; UMP biosynthesis via de novo pathway; (S)-dihydroorotate from bicarbonate: step 2/3. Its function is as follows. Catalyzes the condensation of carbamoyl phosphate and aspartate to form carbamoyl aspartate and inorganic phosphate, the committed step in the de novo pyrimidine nucleotide biosynthesis pathway. The protein is Aspartate carbamoyltransferase catalytic subunit of Beijerinckia indica subsp. indica (strain ATCC 9039 / DSM 1715 / NCIMB 8712).